The following is a 422-amino-acid chain: Probable zinc-type alcohol dehydrogenase-like protein L498 (422 aa).

Zn(2+) is bound by residues Cys108, His129, Cys160, Cys163, Cys166, Cys174, and Cys231.

The cofactor is Zn(2+).

The protein localises to the host cytoplasm. Its subcellular location is the virion. This Acanthamoeba polyphaga (Amoeba) protein is Probable zinc-type alcohol dehydrogenase-like protein L498.